We begin with the raw amino-acid sequence, 72 residues long: VKRPMNAFMVWSQNERRKIMDQWPDMHNAEISERLGRRWQLLQDSEKIPFVKEAGRLRLKHMADYPDYKYRP.

Residues 1–69 constitute a DNA-binding region (HMG box); it reads VKRPMNAFMV…KHMADYPDYK (69 aa).

It is found in the nucleus. The protein is SRY-related protein MG43 of Tarentola mauritanica (Common wall gecko).